The primary structure comprises 238 residues: Probable transcriptional regulatory protein CF0838 (238 aa).

Belongs to the TACO1 family.

The protein resides in the cytoplasm. In Chlamydia felis (strain Fe/C-56) (Chlamydophila felis), this protein is Probable transcriptional regulatory protein CF0838.